The following is a 397-amino-acid chain: Troponin T, skeletal muscle (397 aa).

A compositionally biased stretch (acidic residues) spans 1–16 (MSDDEEYTSSEEEEVV). Disordered regions lie at residues 1 to 148 (MSDD…NFTI), 234 to 261 (ERQK…YPPK), and 294 to 397 (DSNE…EEEE). Composition is skewed to basic and acidic residues over residues 37–77 (EFIK…LKEK), 84–129 (TRAE…EKKR), and 136–148 (MKDK…NFTI). Basic and acidic residues-rich tracts occupy residues 294–307 (DSNE…KEQY) and 319–329 (FGERPGKKAGE). Residues 331-397 (ETPEGEEDAK…EEEEEEEEEE (67 aa)) are compositionally biased toward acidic residues.

Belongs to the troponin T family. Some glutamate residues are polyglycylated by TTLL3B. This modification occurs exclusively on glutamate residues and results in polyglycine chains on the gamma-carboxyl group. Isoform 3 is expressed in the hypoderm. Isoform 8 is expressed in the dorsal vessel. Isoform 6 is expressed in adult TDT muscle and isoform 9 in adult IFM, flight and jump muscles.

Its function is as follows. Troponin T is the tropomyosin-binding subunit of troponin, the thin filament regulatory complex which confers calcium-sensitivity to striated muscle actomyosin ATPase activity. The chain is Troponin T, skeletal muscle (up) from Drosophila melanogaster (Fruit fly).